Here is an 81-residue protein sequence, read N- to C-terminus: NADH-ubiquinone oxidoreductase chain 6 (81 aa).

3 consecutive transmembrane segments (helical) span residues 1–21 (MTYF…GVAS), 27–47 (YGVV…LSLG), and 48–68 (VSFV…VVFV).

It belongs to the complex I subunit 6 family.

It is found in the mitochondrion membrane. It catalyses the reaction a ubiquinone + NADH + 5 H(+)(in) = a ubiquinol + NAD(+) + 4 H(+)(out). Its function is as follows. Core subunit of the mitochondrial membrane respiratory chain NADH dehydrogenase (Complex I) that is believed to belong to the minimal assembly required for catalysis. Complex I functions in the transfer of electrons from NADH to the respiratory chain. The immediate electron acceptor for the enzyme is believed to be ubiquinone. The chain is NADH-ubiquinone oxidoreductase chain 6 (MT-ND6) from Anas platyrhynchos (Mallard).